The sequence spans 376 residues: Dihydroorotate dehydrogenase (quinone) (376 aa).

FMN contacts are provided by residues 78–82 and Thr-102; that span reads AGFDK. Lys-82 is a substrate binding site. 127–131 provides a ligand contact to substrate; the sequence is NRMGF. FMN is bound by residues Asn-157 and Asn-190. Asn-190 provides a ligand contact to substrate. Ser-193 serves as the catalytic Nucleophile. Substrate is bound at residue Asn-195. FMN is bound by residues Lys-228 and Thr-256. 257-258 contributes to the substrate binding site; sequence NT. Residues Gly-286, Gly-315, and 336 to 337 each bind FMN; that span reads YT.

The protein belongs to the dihydroorotate dehydrogenase family. Type 2 subfamily. In terms of assembly, monomer. FMN serves as cofactor.

It is found in the cell membrane. The catalysed reaction is (S)-dihydroorotate + a quinone = orotate + a quinol. The protein operates within pyrimidine metabolism; UMP biosynthesis via de novo pathway; orotate from (S)-dihydroorotate (quinone route): step 1/1. Its function is as follows. Catalyzes the conversion of dihydroorotate to orotate with quinone as electron acceptor. The chain is Dihydroorotate dehydrogenase (quinone) from Trichormus variabilis (strain ATCC 29413 / PCC 7937) (Anabaena variabilis).